Reading from the N-terminus, the 306-residue chain is MGMTLPDITSSENVASAAPLKWVGMEGITVPIQVPMSGEVPAYVNAKTDVYVSLDKSDAKGIHMSRLFLKLNDILGTELLSSTSLTALLNELILSQQGLSQGAKVNLDFALTLRKKALLSNEFGYQSYPIGISTQLVKGVARTVLSLTIAYSSTCPCSSALAQQALSDAISQRFDDEMISKSELTQWITSKTGAVATPHSQRSYAYIKLTLDGDALPNLPELITLLETTIGTPVQTAVKRQDEQAFAKLNAENLMFCEDAARRLKRALERKENVLDYWFKVEHQESLHAHNAVAIDFKDNADEDTM.

It belongs to the GTP cyclohydrolase IV family.

The catalysed reaction is GTP + H2O = 7,8-dihydroneopterin 3'-triphosphate + formate + H(+). The protein operates within cofactor biosynthesis; 7,8-dihydroneopterin triphosphate biosynthesis; 7,8-dihydroneopterin triphosphate from GTP: step 1/1. Functionally, converts GTP to 7,8-dihydroneopterin triphosphate. This Pseudoalteromonas atlantica (strain T6c / ATCC BAA-1087) protein is GTP cyclohydrolase FolE2.